A 643-amino-acid chain; its full sequence is Phosphatidylinositol-3,5-bisphosphate 3-phosphatase MTMR2 (643 aa).

2 stretches are compositionally biased toward polar residues: residues M1 to S12 and D23 to K40. A disordered region spans residues M1–N56. A phosphoserine mark is found at S6 and S9. Over residues S41–D55 the composition is skewed to low complexity. At S58 the chain carries Phosphoserine. The GRAM domain occupies N68–G139. One can recognise a Myotubularin phosphatase domain in the interval G205 to Y580. A 1,2-diacyl-sn-glycero-3-phospho-(1D-myo-inositol-3,5-bisphosphate) is bound by residues N330, N355, and I356. A 1,2-diacyl-sn-glycero-3-phospho-(1D-myo-inositol-3-phosphate) is bound by residues N330, N355, and I356. The active-site Phosphocysteine intermediate is C417. Positions 418, 419, 420, 421, 422, 423, 459, and 463 each coordinate a 1,2-diacyl-sn-glycero-3-phospho-(1D-myo-inositol-3,5-bisphosphate). Residues S418, D419, G420, W421, D422, and R423 each coordinate a 1,2-diacyl-sn-glycero-3-phospho-(1D-myo-inositol-3-phosphate). Residue R463 coordinates a 1,2-diacyl-sn-glycero-3-phospho-(1D-myo-inositol-3-phosphate). A coiled-coil region spans residues I593–E627. Residues Q615–V643 are disordered. Low complexity predominate over residues N620 to S631. Positions P632–V643 are enriched in polar residues.

Belongs to the protein-tyrosine phosphatase family. Non-receptor class myotubularin subfamily. Homodimer (via coiled-coil domain). Heterotetramer consisting of one MTMR2 dimer and one SBF2/MTMR13 dimer; specifically in peripheral nerves stabilizes SBF2/MTMR13 at the membranes and increases MTMR2 catalytic activity towards phosphatidylinositol 3,5-bisphosphate and to a lesser extent towards phosphatidylinositol 3-phosphate. Heterodimer with SBF1/MTMR5; acts as an adapter for the phosphatase MTMR2 to regulate MTMR2 catalytic activity and subcellular location. Heterodimer with MTMR12. Phosphorylation at Ser-58 decreases MTMR2 localization to endocytic vesicular structures.

Its subcellular location is the cytoplasm. The protein resides in the early endosome membrane. It localises to the perinuclear region. The protein localises to the cell projection. It is found in the axon. Its subcellular location is the endosome membrane. It carries out the reaction a 1,2-diacyl-sn-glycero-3-phospho-(1D-myo-inositol-3,5-bisphosphate) + H2O = a 1,2-diacyl-sn-glycero-3-phospho-(1D-myo-inositol-5-phosphate) + phosphate. The catalysed reaction is a 1,2-diacyl-sn-glycero-3-phospho-(1D-myo-inositol-3-phosphate) + H2O = a 1,2-diacyl-sn-glycero-3-phospho-(1D-myo-inositol) + phosphate. It catalyses the reaction 1,2-dioctanoyl-sn-glycero-3-phospho-(1-D-myo-inositol-3-phosphate) + H2O = 1,2-dioctanoyl-sn-glycero-3-phospho-(1D-myo-inositol) + phosphate. The enzyme catalyses 1,2-dioctanoyl-sn-glycero-3-phospho-(1D-myo-inositol-3,5-bisphosphate) + H2O = 1,2-dioctanoyl-sn-glycero-3-phospho-(1D-myo-inositol-5-phosphate) + phosphate. Its function is as follows. Lipid phosphatase that specifically dephosphorylates the D-3 position of phosphatidylinositol 3-phosphate and phosphatidylinositol 3,5-bisphosphate, generating phosphatidylinositol and phosphatidylinositol 5-phosphate. Regulates the level of these phosphoinositides critical for various biological processes including autophagy initiation and autophagosome maturation. The polypeptide is Phosphatidylinositol-3,5-bisphosphate 3-phosphatase MTMR2 (Homo sapiens (Human)).